The sequence spans 323 residues: Tyrosine--tRNA ligase (323 aa).

Tyrosine 36 is an L-tyrosine binding site. The 'HIGH' region motif lies at 41-49; the sequence is PSGEIHLGH. L-tyrosine is bound by residues tyrosine 158, glutamine 162, aspartate 165, and glutamine 180. Residues 214-218 carry the 'KMSKS' region motif; the sequence is KMSSS. Position 217 (serine 217) interacts with ATP.

This sequence belongs to the class-I aminoacyl-tRNA synthetase family. TyrS type 3 subfamily. As to quaternary structure, homodimer.

It is found in the cytoplasm. It carries out the reaction tRNA(Tyr) + L-tyrosine + ATP = L-tyrosyl-tRNA(Tyr) + AMP + diphosphate + H(+). Functionally, catalyzes the attachment of tyrosine to tRNA(Tyr) in a two-step reaction: tyrosine is first activated by ATP to form Tyr-AMP and then transferred to the acceptor end of tRNA(Tyr). The chain is Tyrosine--tRNA ligase from Archaeoglobus fulgidus (strain ATCC 49558 / DSM 4304 / JCM 9628 / NBRC 100126 / VC-16).